The chain runs to 415 residues: Gamma-glutamyl phosphate reductase (415 aa).

Belongs to the gamma-glutamyl phosphate reductase family.

The protein localises to the cytoplasm. The catalysed reaction is L-glutamate 5-semialdehyde + phosphate + NADP(+) = L-glutamyl 5-phosphate + NADPH + H(+). It participates in amino-acid biosynthesis; L-proline biosynthesis; L-glutamate 5-semialdehyde from L-glutamate: step 2/2. Its function is as follows. Catalyzes the NADPH-dependent reduction of L-glutamate 5-phosphate into L-glutamate 5-semialdehyde and phosphate. The product spontaneously undergoes cyclization to form 1-pyrroline-5-carboxylate. The sequence is that of Gamma-glutamyl phosphate reductase from Cutibacterium acnes (strain DSM 16379 / KPA171202) (Propionibacterium acnes).